The sequence spans 350 residues: Glyoxylate reductase 1 (350 aa).

Phosphothreonine is present on Thr-31. Residues 173–174 (RI), 252–254 (TAR), and Asp-278 contribute to the NAD(+) site. Arg-254 is an active-site residue. Glu-283 is a catalytic residue. The Proton donor role is filled by His-301. 301–304 (HMGT) is a binding site for NAD(+).

This sequence belongs to the D-isomer specific 2-hydroxyacid dehydrogenase family.

It is found in the cytoplasm. Its subcellular location is the nucleus. The protein resides in the mitochondrion. The catalysed reaction is glycolate + NAD(+) = glyoxylate + NADH + H(+). The enzyme catalyses glycolate + NADP(+) = glyoxylate + NADPH + H(+). It carries out the reaction (R)-glycerate + NAD(+) = 3-hydroxypyruvate + NADH + H(+). It catalyses the reaction (R)-glycerate + NADP(+) = 3-hydroxypyruvate + NADPH + H(+). Its function is as follows. Glyoxylate reductase that reversibly reduces glyoxylate to glycolate, or alternatively hydroxypyruvate to D-glycerate, using either NADPH or NADH as a cosubstrate. Does not act as a hydroxyisocaproate dehydrogenase even though it also has minor activity on alpha-ketoisocaproate. This Saccharomyces cerevisiae (strain ATCC 204508 / S288c) (Baker's yeast) protein is Glyoxylate reductase 1.